We begin with the raw amino-acid sequence, 601 residues long: Oligoendopeptidase F homolog (601 aa).

His387 contacts Zn(2+). Glu388 is a catalytic residue. Positions 391 and 394 each coordinate Zn(2+).

Belongs to the peptidase M3 family. Zn(2+) is required as a cofactor.

Functionally, hydrolyzes peptides containing between 7 and 17 amino acids with a rather wide specificity. The protein is Oligoendopeptidase F homolog (pepF) of Lactococcus lactis subsp. lactis (strain IL1403) (Streptococcus lactis).